The sequence spans 1472 residues: Type IV pilus biogenesis factor PilY1 homolog PD_1611 (1472 aa).

Residues D1170, D1172, D1174, L1176, and D1178 each contribute to the Ca(2+) site. Residues 1383–1397 are compositionally biased toward polar residues; that stretch reads RGSRSSIGNSDTGAV. The interval 1383-1403 is disordered; the sequence is RGSRSSIGNSDTGAVSTGGDA.

This sequence belongs to the PilY1 family.

The protein resides in the fimbrium. Functionally, one of the three PilY1 homologs of X.fastidiosa, which are involved in bacterial twitching motility as component of the filamentous type IV pili (T4P). The twitching motility of this protein is enhanced by calcium, which may provide the bacterium an adaptive advantage in environments with high calcium concentrations. The polypeptide is Type IV pilus biogenesis factor PilY1 homolog PD_1611 (Xylella fastidiosa (strain Temecula1 / ATCC 700964)).